A 547-amino-acid polypeptide reads, in one-letter code: ATP synthase subunit alpha (547 aa).

ATP is bound at residue 173-180; it reads GDRATGKT. Positions 526–547 are disordered; it reads PEAEALADEDVEQEQIVRQKRG. Residues 528–538 show a composition bias toward acidic residues; it reads AEALADEDVEQ.

The protein belongs to the ATPase alpha/beta chains family. In terms of assembly, F-type ATPases have 2 components, CF(1) - the catalytic core - and CF(0) - the membrane proton channel. CF(1) has five subunits: alpha(3), beta(3), gamma(1), delta(1), epsilon(1). CF(0) has three main subunits: a(1), b(2) and c(9-12). The alpha and beta chains form an alternating ring which encloses part of the gamma chain. CF(1) is attached to CF(0) by a central stalk formed by the gamma and epsilon chains, while a peripheral stalk is formed by the delta and b chains.

The protein localises to the cell membrane. The catalysed reaction is ATP + H2O + 4 H(+)(in) = ADP + phosphate + 5 H(+)(out). Produces ATP from ADP in the presence of a proton gradient across the membrane. The alpha chain is a regulatory subunit. The sequence is that of ATP synthase subunit alpha from Nocardioides sp. (strain ATCC BAA-499 / JS614).